The primary structure comprises 929 residues: MTTEFVRQDLAQNSSTAAEPDRVRVIREGVASYLPDIDTEETAEWLESFDELLERSGPARARYLMLRLLERAGEQRVAIPALTSTDYVNTIPTELEPWFPGDEDVERRYRAWIRWNAAIMVHRAQRPGVGVGGHISTYASSATLYEVGFNHFFRGKSHPGGGDHVFIQGHASPGIYARAFLEGRLTTDQLDGFRQEHSHSGGGLPSYPHPRLMPDFWEFPTVSMGLGPMNAIYQARFNHYLHDRGIKDTSDQHVWAFLGDGEMDEPESRGLIQVAANEALDNLTFVINCNLQRLDGPVRGNGKIIQELESFFRGAGWNVIKVVWGREWDVLLHADRDGALVNLMNSTPDGDYQTYKANDGAYVRDHFFGRDPRTKALVADMSDQEIWNLKRGGHDYRKVYAAYRAAMEHKGQPTVILAKTIKGYTLGQHFEGRNATHQMKKLALEDLKNFRDVTRVPVSDAQLEEDPYLPPYYHPGPEAPEIRYLLERRRALGGFVPSRRTKSKPLALPGSDTYKALKKGSGSQAVATTMATVRTFKELLRDKNIGPRIVPIIPDEARTFGMDSWFPSLKIYNRNGQLYTSVDSELMLAYKESEVGQILHEGINEAGSTSSFTAVGTSYSTHDEPMIPIYIFYSMFGFQRTGDGLWAAADQMARGFVLGATAGRTTLTGEGLQHADGHSLLLASTNPAAVTYDPAFAYEIAHIIESGLQRMYGEDPENVFFYLTIYNEPYQQPAEPENLDVEALLKGLYLYRPAPEKRAKSAQILASGVAMPEALRAADLLASDWDVAADVWSVTSWGELNREGVAIEKHRLRHPDEPAGTPHVTSALADAAGPVIAVSDWMRAVPEQIRPWVPGTYVTLGTDGFGFSDTRPAARRYFNTDAESVVVAVLQGLARDGEIDASVAAQAAEQYRIDDVSAAGVSYADTGSA.

An Isoglutamyl lysine isopeptide (Lys-Gln) (interchain with Q-Cter in protein Pup) cross-link involves residue K375.

In terms of assembly, homodimer. Part of the PDH complex, consisting of multiple copies of AceE (E1), DlaT (E2) and Lpd (E3). The cofactor is Mg(2+). Thiamine diphosphate is required as a cofactor.

It catalyses the reaction N(6)-[(R)-lipoyl]-L-lysyl-[protein] + pyruvate + H(+) = N(6)-[(R)-S(8)-acetyldihydrolipoyl]-L-lysyl-[protein] + CO2. Component of the pyruvate dehydrogenase (PDH) complex, that catalyzes the overall conversion of pyruvate to acetyl-CoA and CO(2). AceE has reductase activity with pyruvate but does not react with 2-oxoglutarate. The sequence is that of Pyruvate dehydrogenase E1 component (aceE) from Mycolicibacterium smegmatis (strain ATCC 700084 / mc(2)155) (Mycobacterium smegmatis).